A 381-amino-acid polypeptide reads, in one-letter code: Ribosomal lysine N-methyltransferase set11 (381 aa).

In terms of domain architecture, SET spans 23–224; the sequence is PSLEFSVIPD…KGEQIFLCYG (202 aa). Tyr-223 is an S-adenosyl-L-methionine binding site.

The protein belongs to the class V-like SAM-binding methyltransferase superfamily. RKM2 family.

It is found in the cytoplasm. The protein localises to the nucleus. Its subcellular location is the nucleolus. Its function is as follows. S-adenosyl-L-methionine-dependent protein-lysine N-methyltransferase that trimethylates 60S ribosomal protein L12 (rpl1201 and rpl1202) at 'Lys-4' and may dimethylate L12 also at 'Lys-40' and 'Lys-41'. Overexpression causes a severe growth defect. Has a role in meiosis. The protein is Ribosomal lysine N-methyltransferase set11 (set11) of Schizosaccharomyces pombe (strain 972 / ATCC 24843) (Fission yeast).